We begin with the raw amino-acid sequence, 221 residues long: Tetraspanin-2 (221 aa).

Residues 1–13 (MGRFRGGLRCIKY) are Cytoplasmic-facing. Residues 14 to 34 (LLLGFNLLFWLAGSAVIAFGL) form a helical membrane-spanning segment. At 35–54 (WFRFGGTMKDLSSEDKSPEY) the chain is on the extracellular side. A helical membrane pass occupies residues 55–75 (FYVGLYVLVGAGALMMTVGFF). Residues 76–90 (GCCGAMRESQCVLGS) lie on the Cytoplasmic side of the membrane. Residues 91-111 (FFTCLLVIFAAEVTTGVFAFI) traverse the membrane as a helical segment. The Extracellular portion of the chain corresponds to 112–188 (GKDVAIRHVQ…ETVISAKLQL (77 aa)). Asn139 carries an N-linked (GlcNAc...) asparagine glycan. A helical membrane pass occupies residues 189–209 (IGIVGIGIAGLTIFGMIFSMV). Residues 210 to 221 (LCCAIRNSRDVI) are Cytoplasmic-facing.

The protein belongs to the tetraspanin (TM4SF) family.

Its subcellular location is the membrane. Its function is as follows. May play a role in signalling in oligodendrocytes in the early stages of their terminal differentiation into myelin-forming glia and may also function in stabilizing the mature sheath. This chain is Tetraspanin-2 (Tspan2), found in Mus musculus (Mouse).